The following is a 523-amino-acid chain: REST corepressor 2 (523 aa).

A disordered region spans residues 1 to 43 (MPSVMEKPSAGSGILSRSRAKTAPNGGQPHSEDDSSEEEHSHD). Residues 30 to 43 (HSEDDSSEEEHSHD) show a composition bias toward basic and acidic residues. Phosphoserine is present on residues S31, S35, S36, and S63. In terms of domain architecture, ELM2 spans 44 to 129 (SMIRVGTNYQ…KSLADLANFT (86 aa)). K88 participates in a covalent cross-link: Glycyl lysine isopeptide (Lys-Gly) (interchain with G-Cter in SUMO2). The region spanning 130 to 181 (PFPDEWTVEDKVLFEQAFGFHGKCFQRIQQMLPDKLIPSLVKYYYSWKKTRS) is the SANT 1 domain. The tract at residues 185 to 265 (VMDRQARRLG…RRRPPKGMYL (81 aa)) is disordered. At S202 the chain carries Phosphoserine. Residues 248-260 (YRHHPLRTRRRPP) show a composition bias toward basic residues. Residues 283-314 (TLRGLDSQLISLKRQVQSMKQTNSSLRQALEG) adopt a coiled-coil conformation. An SANT 2 domain is found at 327 to 378 (KFNSRWTTDEQLLAVQAIRRYGKDFGAIAEVIGNKTLTQVKTFFVSYRRRFN). The disordered stretch occupies residues 387-523 (EAEQDGAPTA…AQLEPPAPSL (137 aa)). Positions 432 to 459 (SVPPAPPPPPPPTSLSQPPPLLRPPLPT) are enriched in pro residues. Low complexity predominate over residues 460 to 482 (APTLLRQPPPLQQGRFLQPRLAP). An Asymmetric dimethylarginine modification is found at R479.

The protein belongs to the CoREST family.

The protein localises to the nucleus. Its function is as follows. May act as a component of a corepressor complex that represses transcription. The protein is REST corepressor 2 (Rcor2) of Rattus norvegicus (Rat).